The sequence spans 632 residues: Phosphomethylpyrimidine synthase (632 aa).

Residues 1 to 13 (MNIRSNPDTTLPA) show a composition bias toward polar residues. The segment at 1 to 26 (MNIRSNPDTTLPAVTTGPLPSSRKIF) is disordered. Substrate contacts are provided by residues Asn-221, Met-250, Tyr-279, His-315, 335-337 (SRG), 376-379 (DGLR), and Glu-415. Residue His-419 coordinates Zn(2+). Tyr-442 serves as a coordination point for substrate. Residue His-483 participates in Zn(2+) binding. Cys-563, Cys-566, and Cys-571 together coordinate [4Fe-4S] cluster.

The protein belongs to the ThiC family. In terms of assembly, homodimer. The cofactor is [4Fe-4S] cluster.

The enzyme catalyses 5-amino-1-(5-phospho-beta-D-ribosyl)imidazole + S-adenosyl-L-methionine = 4-amino-2-methyl-5-(phosphooxymethyl)pyrimidine + CO + 5'-deoxyadenosine + formate + L-methionine + 3 H(+). The protein operates within cofactor biosynthesis; thiamine diphosphate biosynthesis. Functionally, catalyzes the synthesis of the hydroxymethylpyrimidine phosphate (HMP-P) moiety of thiamine from aminoimidazole ribotide (AIR) in a radical S-adenosyl-L-methionine (SAM)-dependent reaction. This chain is Phosphomethylpyrimidine synthase, found in Afipia carboxidovorans (strain ATCC 49405 / DSM 1227 / KCTC 32145 / OM5) (Oligotropha carboxidovorans).